Here is a 459-residue protein sequence, read N- to C-terminus: GTPase Der (459 aa).

2 consecutive EngA-type G domains span residues 3–167 (FTLA…PEPV) and 188–363 (IRVA…AVWN). GTP contacts are provided by residues 9-16 (GRPNVGKS), 56-60 (DTAGL), 119-122 (NKSE), 194-201 (GRPNAGKS), 241-245 (DTAGL), and 306-309 (NKWD). Residues 364 to 448 (RRVPTAALNR…PVRITLREKA (85 aa)) enclose the KH-like domain.

The protein belongs to the TRAFAC class TrmE-Era-EngA-EngB-Septin-like GTPase superfamily. EngA (Der) GTPase family. As to quaternary structure, associates with the 50S ribosomal subunit.

Functionally, GTPase that plays an essential role in the late steps of ribosome biogenesis. The chain is GTPase Der from Rhodopseudomonas palustris (strain TIE-1).